Reading from the N-terminus, the 543-residue chain is Ipecac alkaloid beta-glucosidase 3 (543 aa).

A beta-D-glucoside contacts are provided by residues Q36, H140, 185-186 (NE), Y350, E422, W471, and F487. The active-site Proton donor is E186. The active-site Nucleophile is the E422.

It belongs to the glycosyl hydrolase 1 family.

It localises to the cytoplasm. Its subcellular location is the cytosol. The catalysed reaction is deacetylipecoside + H2O = deacetylipecoside aglycone + D-glucose. It catalyses the reaction deacetylisoipecoside + H2O = deacetylisoipecoside aglycone + D-glucose. The protein operates within alkaloid biosynthesis. Beta-glucosidase catalyzing deglucosylation on N-deacetylisoipecoside and N-deacetylipecoside. In Carapichea ipecacuanha (Ipecac), this protein is Ipecac alkaloid beta-glucosidase 3.